Here is a 151-residue protein sequence, read N- to C-terminus: Viral interleukin-17 (151 aa).

A signal peptide spans 1 to 22 (MTFRKTSLVLLLLLSIDCIVKS). Asn-36, Asn-53, and Asn-64 each carry an N-linked (GlcNAc...) asparagine; by host glycan. 2 disulfides stabilise this stretch: Cys-90–Cys-140 and Cys-95–Cys-142.

The protein belongs to the IL-17 family.

It localises to the secreted. In Saimiri sciureus (Common squirrel monkey), this protein is Viral interleukin-17 (13).